The primary structure comprises 464 residues: Cysteine--tRNA ligase (464 aa).

C32 provides a ligand contact to Zn(2+). The 'HIGH' region signature appears at 34–44; it reads VTVYDDCHIGH. Zn(2+) is bound by residues C213, H238, and E242. Positions 270-274 match the 'KMSKS' region motif; the sequence is KMSKS. K273 contacts ATP.

It belongs to the class-I aminoacyl-tRNA synthetase family. Monomer. Zn(2+) is required as a cofactor.

It is found in the cytoplasm. It catalyses the reaction tRNA(Cys) + L-cysteine + ATP = L-cysteinyl-tRNA(Cys) + AMP + diphosphate. In Francisella tularensis subsp. holarctica (strain LVS), this protein is Cysteine--tRNA ligase.